The primary structure comprises 224 residues: 25 kDa integral membrane protein (224 aa).

The Cytoplasmic portion of the chain corresponds to 1 to 12; it reads MKLSFTKVSLTN. A helical membrane pass occupies residues 13 to 33; the sequence is ILILFNCLFIIFSMIVLTFGV. Residues 34–52 are Extracellular-facing; sequence IPQIYLLKFANILHGVRPS. The helical transmembrane segment at 53 to 73 threads the bilayer; it reads IFPIVCFTGSFVIIVACVGII. The Cytoplasmic segment spans residues 74–80; that stretch reads GLMKGGK. A helical membrane pass occupies residues 81–101; that stretch reads CLLTMHIIALIIATIIDISTA. Topologically, residues 102–189 are extracellular; sequence TLSAIKQNEF…LNKYVRYYID (88 aa). Asn-120 carries N-linked (GlcNAc...) asparagine glycosylation. A helical transmembrane segment spans residues 190–210; that stretch reads ILIYLCFIFGFIKLIYSLFTF. Over 211-224 the chain is Cytoplasmic; the sequence is TQRQRIFSEKTPVA.

This sequence belongs to the tetraspanin (TM4SF) family.

Its subcellular location is the membrane. This Schistosoma japonicum (Blood fluke) protein is 25 kDa integral membrane protein.